Reading from the N-terminus, the 299-residue chain is Deoxyribonuclease-1-like 2 (299 aa).

The signal sequence occupies residues 1–20; that stretch reads MGGPRALLAALWALEAAGTA. Catalysis depends on residues Glu-99 and His-170. A disulfide bond links Cys-209 and Cys-245.

This sequence belongs to the DNase I family. It depends on Mg(2+) as a cofactor. Ca(2+) is required as a cofactor. As to expression, preferentially expressed in the skin and up-regulated during keratinocytes differentiation. Highly abundant (at protein level) in the stratum granulosum.

It localises to the cytoplasm. The protein resides in the secreted. Its function is as follows. Divalent cation-dependent acid DNA endonuclease involved in the breakdown of the nucleus during corneocyte formation of epidermal keratinocytes. May play an immune role by eliminating harmful DNA released into the extracellular environment by damaged epidermal cells. The sequence is that of Deoxyribonuclease-1-like 2 (DNASE1L2) from Homo sapiens (Human).